We begin with the raw amino-acid sequence, 423 residues long: UDP-N-acetylglucosamine 1-carboxyvinyltransferase 2 (423 aa).

23 to 24 (KN) contributes to the phosphoenolpyruvate binding site. Arg-93 is a binding site for UDP-N-acetyl-alpha-D-glucosamine. Residue Cys-117 is the Proton donor of the active site. The residue at position 117 (Cys-117) is a 2-(S-cysteinyl)pyruvic acid O-phosphothioketal. UDP-N-acetyl-alpha-D-glucosamine-binding positions include 122–126 (RPIDQ), Asp-305, and Ile-327.

The protein belongs to the EPSP synthase family. MurA subfamily.

It is found in the cytoplasm. It carries out the reaction phosphoenolpyruvate + UDP-N-acetyl-alpha-D-glucosamine = UDP-N-acetyl-3-O-(1-carboxyvinyl)-alpha-D-glucosamine + phosphate. Its pathway is cell wall biogenesis; peptidoglycan biosynthesis. In terms of biological role, cell wall formation. Adds enolpyruvyl to UDP-N-acetylglucosamine. This Listeria monocytogenes serotype 4b (strain F2365) protein is UDP-N-acetylglucosamine 1-carboxyvinyltransferase 2.